The following is a 589-amino-acid chain: Coronatine-insensitive protein homolog 2 (589 aa).

The 42-residue stretch at 18–59 folds into the F-box domain; sequence IPDVALGLVMGFVEDPWDRDAISLVCRHWCRVDALSRKHVTV. Jasmonate-binding residues include Arg87, Arg352, Arg414, and Arg501.

As to quaternary structure, interacts with TIFY9/JAZ5, TIFY11C/JAZ11 and TIFY11D/JAZ12 in a coronatine-dependent manner.

Functionally, involved in jasmonate (JA) signaling. Required for jasmonate signaling in plant defense responses. Component of SCF(COI1) E3 ubiquitin ligase complexes, which may mediate the ubiquitination and subsequent proteasomal degradation of target proteins, including TIFY/JAZ family. In Oryza sativa subsp. indica (Rice), this protein is Coronatine-insensitive protein homolog 2.